Consider the following 468-residue polypeptide: Protein CA_C1420 (468 aa).

The interval 1–289 (MSLNGFYLLP…LKELERIRKD (289 aa)) is unknown. One can recognise an AMMECR1 domain in the interval 296 to 468 (QEKDPYVKLA…KFMVTRHKES (173 aa)).

The protein is Protein CA_C1420 of Clostridium acetobutylicum (strain ATCC 824 / DSM 792 / JCM 1419 / IAM 19013 / LMG 5710 / NBRC 13948 / NRRL B-527 / VKM B-1787 / 2291 / W).